We begin with the raw amino-acid sequence, 158 residues long: Trafficking protein particle complex subunit 6B (158 aa).

Belongs to the TRAPP small subunits family. BET3 subfamily. Homodimer. Part of a TRAPP complex. Heterodimer with TRAPPC3. The heterodimer TRAPPC6B-TRAPPC3 interacts with TRAPPC1 likely providing a core for TRAPP complex formation.

It localises to the golgi apparatus. It is found in the cis-Golgi network. Its subcellular location is the endoplasmic reticulum. In terms of biological role, component of a transport protein particle (TRAPP) complex that may function in specific stages of inter-organelle traffic. Specifically involved in the early development of neural circuitry, likely by controlling the frequency and amplitude of intracellular calcium transients implicated in the regulation of neuron differentiation and survival. In Bos taurus (Bovine), this protein is Trafficking protein particle complex subunit 6B.